Here is a 540-residue protein sequence, read N- to C-terminus: CTP synthase (540 aa).

Residues 1 to 270 (MNNLTSTKFI…DTQILKHFNI (270 aa)) form an amidoligase domain region. S18 lines the CTP pocket. Residue S18 coordinates UTP. ATP-binding positions include 19-24 (SLGKGL) and D76. The Mg(2+) site is built by D76 and E144. Residues 151–153 (DIE), 191–196 (KTKPTQ), and K227 each bind CTP. UTP-binding positions include 191-196 (KTKPTQ) and K227. The Glutamine amidotransferase type-1 domain maps to 295–537 (TIAIIGKYIK…VQASLNYQET (243 aa)). Residue G356 participates in L-glutamine binding. C383 serves as the catalytic Nucleophile; for glutamine hydrolysis. L-glutamine is bound by residues 384–387 (MGMQ), E407, and R462. Catalysis depends on residues H510 and E512.

The protein belongs to the CTP synthase family. In terms of assembly, homotetramer.

The enzyme catalyses UTP + L-glutamine + ATP + H2O = CTP + L-glutamate + ADP + phosphate + 2 H(+). The catalysed reaction is L-glutamine + H2O = L-glutamate + NH4(+). It carries out the reaction UTP + NH4(+) + ATP = CTP + ADP + phosphate + 2 H(+). Its pathway is pyrimidine metabolism; CTP biosynthesis via de novo pathway; CTP from UDP: step 2/2. Its activity is regulated as follows. Allosterically activated by GTP, when glutamine is the substrate; GTP has no effect on the reaction when ammonia is the substrate. The allosteric effector GTP functions by stabilizing the protein conformation that binds the tetrahedral intermediate(s) formed during glutamine hydrolysis. Inhibited by the product CTP, via allosteric rather than competitive inhibition. In terms of biological role, catalyzes the ATP-dependent amination of UTP to CTP with either L-glutamine or ammonia as the source of nitrogen. Regulates intracellular CTP levels through interactions with the four ribonucleotide triphosphates. The polypeptide is CTP synthase (Ehrlichia ruminantium (strain Welgevonden)).